The following is an 852-amino-acid chain: MAGALAGLAAGLQVPRVAPSPDSDSDTDSEDPSLRRSAGGLLRSQVIHSGHFMVSSPHSDSLPRRRDQEGSVGPSDFGPRSIDPTLTRLFECLSLAYSGKLVSPKWKNFKGLKLLCRDKIRLNNAIWRAWYIQYVKRRKSPVCGFVTPLQGPEADAHRKPEAVVLEGNYWKRRIEVVMREYHKWRIYYKKRLRKPSREDDLLAPKQAEGRWPPPEQWCKQLFSSVVPVLLGDPEEEPGGRQLLDLNCFLSDISDTLFTMTQSGPSPLQLPPEDAYVGNADMIQPDLTPLQPSLDDFMDISDFFTNSRLPQPPMPSNFPEPPSFSPVVDSLFSSGTLGPEVPPASSAMTHLSGHSRLQARNSCPGPLDSSAFLSSDFLLPEDPKPRLPPPPVPPPLLHYPPPAKVPGLEPCPPPPFPPMAPPTALLQEEPLFSPRFPFPTVPPAPGVSPLPAPAAFPPTPQSVPSPAPTPFPIELLPLGYSEPAFGPCFSMPRGKPPAPSPRGQKASPPTLAPATASPPTTAGSNNPCLTQLLTAAKPEQALEPPLVSSTLLRSPGSPQETVPEFPCTFLPPTPAPTPPRPPPGPATLAPSRPLLVPKAERLSPPAPSGSERRLSGDLSSMPGPGTLSVRVSPPQPILSRGRPDSNKTENRRITHISAEQKRRFNIKLGFDTLHGLVSTLSAQPSLKVSKATTLQKTAEYILMLQQERAGLQEEAQQLRDEIEELNAAINLCQQQLPATGVPITHQRFDQMRDMFDDYVRTRTLHNWKFWVFSILIRPLFESFNGMVSTASVHTLRQTSLAWLDQYCSLPALRPTVLNSLRQLGTSTSILTDPGRIPEQATRAVTEGTLGKPL.

Residues 1–12 (MAGALAGLAAGL) are compositionally biased toward low complexity. Disordered regions lie at residues 1–36 (MAGALAGLAAGLQVPRVAPSPDSDSDTDSEDPSLRR) and 54–80 (VSSPHSDSLPRRRDQEGSVGPSDFGPR). Phosphoserine is present on residues S20, S23, and S25. T27 bears the Phosphothreonine mark. Phosphoserine is present on S29. The residue at position 196 (S196) is a Phosphoserine. Disordered regions lie at residues 328 to 365 (DSLFSSGTLGPEVPPASSAMTHLSGHSRLQARNSCPGP), 486 to 527 (PCFS…NNPC), and 548 to 648 (STLL…NKTE). Positions 505-521 (ASPPTLAPATASPPTTA) are enriched in low complexity. Residues 548–559 (STLLRSPGSPQE) are compositionally biased toward polar residues. S556 is modified (phosphoserine; by AMPK). Residues 568 to 584 (FLPPTPAPTPPRPPPGP) are compositionally biased toward pro residues. S602, S614, and S631 each carry phosphoserine. A bHLH domain is found at 649-703 (NRRITHISAEQKRRFNIKLGFDTLHGLVSTLSAQPSLKVSKATTLQKTAEYILML). Residues 703–724 (LQQERAGLQEEAQQLRDEIEEL) are leucine-zipper.

In terms of assembly, binds DNA as a heterodimer with MLX/TCFL4. Phosphorylation at Ser-556 by AMPK inactivates the DNA-binding activity. In terms of tissue distribution, expressed in liver, heart, kidney, cerebellum and intestinal tissues.

The protein localises to the nucleus. Binds DNA as a heterodimer with MLX/TCFL4 and activates transcription. Binds to the canonical E box sequence 5'-CACGTG-3'. Plays a role in transcriptional activation of glycolytic target genes. Involved in glucose-responsive gene regulation. Regulates transcription in response to changes in cellular carbohydrate abundance such as occurs during fasting to feeding metabolic transition. Refeeding stimulates MLXIPL/ChREBP transcription factor, leading to increased BCKDK to PPM1K expression ratio, phosphorylation and activation of ACLY that ultimately results in the generation of malonyl-CoA and oxaloacetate immediate substrates of de novo lipogenesis and gluconeogenesis, respectively. The polypeptide is Carbohydrate-responsive element-binding protein (MLXIPL) (Homo sapiens (Human)).